The primary structure comprises 323 residues: MAAPKGSLWVRAQLGLLPLLLLTMALAGGPGTASAEAFDSVLGDTASCHRACQLTYPLHTYPKEEELYACQRGCRLFSICQFVDDGIDLNRTKLECESACTEAYSQSDEQYACHLGCQNQLPFAELRQEQLMSLMPKMHLLFPLTLVRSFWSDVMDSAQSFITSSWTFYLQADDGKIVIFQSKPEIQYAPQLEQEPTNLKESSLSKMSYLQMRSSQAHRNYLEDGENDGFLRCLSLNSGWILTMTLVLSVMVLLWICCATVATAVEQYVPSEKLSIYGDLEFVNEQKLNRYPASSLVLVRSKAEDHDEAGPLPTKVNLAHSEI.

Positions 1 to 35 are cleaved as a signal peptide; sequence MAAPKGSLWVRAQLGLLPLLLLTMALAGGPGTASA. The Extracellular segment spans residues 36–238; sequence EAFDSVLGDT…GFLRCLSLNS (203 aa). A glycan (N-linked (GlcNAc...) asparagine) is linked at Asn90. The helical transmembrane segment at 239–259 threads the bilayer; it reads GWILTMTLVLSVMVLLWICCA. The Cytoplasmic segment spans residues 260–323; it reads TVATAVEQYV…TKVNLAHSEI (64 aa). Residues 263–281 carry the ATG16L1-binding motif motif; that stretch reads TAVEQYVPSEKLSIYGDLE.

It belongs to the TMEM59 family. As to quaternary structure, interacts with ATG16L1 (via WD repeats). N-glycosylated.

Its subcellular location is the late endosome membrane. The protein localises to the lysosome membrane. The protein resides in the cell membrane. It localises to the golgi apparatus membrane. Functionally, acts as a regulator of autophagy in response to S.aureus infection by promoting activation of LC3 (MAP1LC3A, MAP1LC3B or MAP1LC3C). Acts by interacting with ATG16L1, leading to promote a functional complex between LC3 and ATG16L1 and promoting LC3 lipidation and subsequent activation of autophagy. Modulates the O-glycosylation and complex N-glycosylation steps occurring during the Golgi maturation of several proteins such as APP, BACE1, SEAP or PRNP. Inhibits APP transport to the cell surface and further shedding. The polypeptide is Transmembrane protein 59 (TMEM59) (Sus scrofa (Pig)).